The sequence spans 218 residues: Pyridoxine/pyridoxamine 5'-phosphate oxidase (218 aa).

Substrate-binding positions include 14 to 17 (RREY) and Lys72. FMN-binding positions include 67–72 (RIVLLK), 82–83 (YT), Arg88, Lys89, and Gln111. Substrate is bound by residues Tyr129, Arg133, and Ser137. FMN-binding positions include 146–147 (QS) and Trp191. Residue 197–199 (RLH) coordinates substrate. Arg201 lines the FMN pocket.

It belongs to the pyridoxamine 5'-phosphate oxidase family. As to quaternary structure, homodimer. FMN serves as cofactor.

It carries out the reaction pyridoxamine 5'-phosphate + O2 + H2O = pyridoxal 5'-phosphate + H2O2 + NH4(+). The catalysed reaction is pyridoxine 5'-phosphate + O2 = pyridoxal 5'-phosphate + H2O2. Its pathway is cofactor metabolism; pyridoxal 5'-phosphate salvage; pyridoxal 5'-phosphate from pyridoxamine 5'-phosphate: step 1/1. It functions in the pathway cofactor metabolism; pyridoxal 5'-phosphate salvage; pyridoxal 5'-phosphate from pyridoxine 5'-phosphate: step 1/1. Catalyzes the oxidation of either pyridoxine 5'-phosphate (PNP) or pyridoxamine 5'-phosphate (PMP) into pyridoxal 5'-phosphate (PLP). The sequence is that of Pyridoxine/pyridoxamine 5'-phosphate oxidase from Escherichia fergusonii (strain ATCC 35469 / DSM 13698 / CCUG 18766 / IAM 14443 / JCM 21226 / LMG 7866 / NBRC 102419 / NCTC 12128 / CDC 0568-73).